The primary structure comprises 169 residues: Cell division inhibitor SulA (169 aa).

Residues alanine 106 to tyrosine 112 form a ftsZ binding region. Positions lysine 162–histidine 169 are lon protease binding.

Belongs to the SulA family. In terms of assembly, interacts with FtsZ. Post-translationally, is rapidly cleaved and degraded by the Lon protease once DNA damage is repaired.

Its function is as follows. Component of the SOS system and an inhibitor of cell division. Accumulation of SulA causes rapid cessation of cell division and the appearance of long, non-septate filaments. In the presence of GTP, binds a polymerization-competent form of FtsZ in a 1:1 ratio, thus inhibiting FtsZ polymerization and therefore preventing it from participating in the assembly of the Z ring. This mechanism prevents the premature segregation of damaged DNA to daughter cells during cell division. The chain is Cell division inhibitor SulA from Escherichia fergusonii (strain ATCC 35469 / DSM 13698 / CCUG 18766 / IAM 14443 / JCM 21226 / LMG 7866 / NBRC 102419 / NCTC 12128 / CDC 0568-73).